A 227-amino-acid polypeptide reads, in one-letter code: uncharacterized protein (227 aa).

An N-terminal signal peptide occupies residues 1–23 (MKKRFSLIMMTGLLFGLTSPAFA). Positions 36–227 (NVAVLLDASG…FTQQSLMLSK (192 aa)) constitute a VWFA domain.

It to B.subtilis YwmD.

This is an uncharacterized protein from Bacillus subtilis (strain 168).